Reading from the N-terminus, the 146-residue chain is Hemoglobin cathodic subunit beta (146 aa).

In terms of domain architecture, Globin spans 2-146 (QWSSSERSVI…VVSGLSKQYF (145 aa)). His-63 serves as a coordination point for heme b.

As to quaternary structure, heterotetramer of two alpha and two beta chains. As to expression, red blood cells.

Its function is as follows. Involved in oxygen transport from the gills to various peripheral tissues. The chain is Hemoglobin cathodic subunit beta from Ophisurus serpens (Serpent eel).